A 94-amino-acid chain; its full sequence is Acylphosphatase (94 aa).

The Acylphosphatase-like domain occupies 8-94; it reads TVHVIVKGKV…EKRYKHFAQL (87 aa). Active-site residues include R23 and N41.

It belongs to the acylphosphatase family.

It catalyses the reaction an acyl phosphate + H2O = a carboxylate + phosphate + H(+). The protein is Acylphosphatase (acyP) of Bordetella parapertussis (strain 12822 / ATCC BAA-587 / NCTC 13253).